The sequence spans 959 residues: General transcription factor II-I repeat domain-containing protein 1 (959 aa).

Glycyl lysine isopeptide (Lys-Gly) (interchain with G-Cter in SUMO2) cross-links involve residues Lys27 and Lys94. A compositionally biased stretch (basic and acidic residues) spans 96–106; that stretch reads PEAEHPKKVQR. The interval 96–117 is disordered; that stretch reads PEAEHPKKVQRGEGGGRSLPRS. The stretch at 119–213 is one GTF2I-like 1 repeat; sequence LEHGSDVYLL…LEDGGRDSKA (95 aa). Glycyl lysine isopeptide (Lys-Gly) (interchain with G-Cter in SUMO2) cross-links involve residues Lys184, Lys212, Lys225, Lys238, Lys271, Lys294, Lys308, Lys337, Lys436, Lys439, and Lys443. Residues 230–250 form a disordered region; that stretch reads CGLHGQAPKVPPQDLPPTATS. A GTF2I-like 2 repeat occupies 342 to 436; the sequence is IKETEDINTL…FDERIFTGNK (95 aa). Ser448 bears the Phosphoserine mark. A disordered region spans residues 468–492; it reads NARSDKGSMSEDCGPGTSGELGGLR. The GTF2I-like 3 repeat unit spans residues 556 to 650; it reads DSHGDVIRPL…ELLTEGVKEP (95 aa). Glycyl lysine isopeptide (Lys-Gly) (interchain with G-Cter in SUMO2) cross-links involve residues Lys567, Lys579, Lys588, Lys622, Lys638, and Lys648. The residue at position 654 (Ser654) is a Phosphoserine. The tract at residues 654 to 679 is disordered; that stretch reads SQGTASSLGFSPPALPPERDSGDPLV. Residues Pro669, Pro670, Asp680, and Lys684 each participate in a glycyl lysine isopeptide (Lys-Gly) (interchain with G-Cter in SUMO2) cross-link. Position 686 is a phosphoserine (Gln686). GTF2I-like repeat units lie at residues 696–790 and 793–887; these read LSRI…KPDE and ANRL…ICND. Residues Ile701, Lys724, Lys732, Lys772, Lys774, Lys787, Lys829, Lys889, and Lys893 each participate in a glycyl lysine isopeptide (Lys-Gly) (interchain with G-Cter in SUMO2) cross-link. A disordered region spans residues 892–927; it reads AKDSSIPKRKRKRVSEGNSVSSSSSSSSSSSSNPDS. The Nuclear localization signal motif lies at 898 to 905; that stretch reads PKRKRKRV. The segment covering 910–923 has biased composition (low complexity); it reads SVSSSSSSSSSSSS.

Belongs to the TFII-I family. Interacts with the retinoblastoma protein (RB1) via its C-terminus. In terms of tissue distribution, highly expressed in adult skeletal muscle, heart, fibroblast, bone and fetal tissues. Expressed at lower levels in all other tissues tested.

Its subcellular location is the nucleus. Functionally, may be a transcription regulator involved in cell-cycle progression and skeletal muscle differentiation. May repress GTF2I transcriptional functions, by preventing its nuclear residency, or by inhibiting its transcriptional activation. May contribute to slow-twitch fiber type specificity during myogenesis and in regenerating muscles. Binds troponin I slow-muscle fiber enhancer (USE B1). Binds specifically and with high affinity to the EFG sequences derived from the early enhancer of HOXC8. The sequence is that of General transcription factor II-I repeat domain-containing protein 1 (GTF2IRD1) from Homo sapiens (Human).